The following is a 130-amino-acid chain: Probable pilin MJ0835.1 (130 aa).

Positions 1–14 (MNTMENKIIKSKKA) are excised as a propeptide. Positions 15–23 (QVSLEFSFL) match the QXSXEXXXL motif.

The N-terminus is cleaved by the prepilin peptidase EppA, which recognizes the class III signal sequence.

It is found in the secreted. The protein localises to the cell surface. It localises to the fimbrium. The protein is Probable pilin MJ0835.1 of Methanocaldococcus jannaschii (strain ATCC 43067 / DSM 2661 / JAL-1 / JCM 10045 / NBRC 100440) (Methanococcus jannaschii).